Here is a 204-residue protein sequence, read N- to C-terminus: Cytochrome c oxidase subunit 3 (204 aa).

5 helical membrane passes run 12-32, 56-76, 101-121, 133-153, and 171-191; these read YGNL…IQWW, GMML…WAYF, FQIP…VTWA, AIHS…LQMM, and FFVA…FLFM.

It belongs to the cytochrome c oxidase subunit 3 family. As to quaternary structure, component of the cytochrome c oxidase (complex IV, CIV), a multisubunit enzyme composed of a catalytic core of 3 subunits and several supernumerary subunits. The complex exists as a monomer or a dimer and forms supercomplexes (SCs) in the inner mitochondrial membrane with ubiquinol-cytochrome c oxidoreductase (cytochrome b-c1 complex, complex III, CIII).

The protein localises to the mitochondrion inner membrane. It catalyses the reaction 4 Fe(II)-[cytochrome c] + O2 + 8 H(+)(in) = 4 Fe(III)-[cytochrome c] + 2 H2O + 4 H(+)(out). Component of the cytochrome c oxidase, the last enzyme in the mitochondrial electron transport chain which drives oxidative phosphorylation. The respiratory chain contains 3 multisubunit complexes succinate dehydrogenase (complex II, CII), ubiquinol-cytochrome c oxidoreductase (cytochrome b-c1 complex, complex III, CIII) and cytochrome c oxidase (complex IV, CIV), that cooperate to transfer electrons derived from NADH and succinate to molecular oxygen, creating an electrochemical gradient over the inner membrane that drives transmembrane transport and the ATP synthase. Cytochrome c oxidase is the component of the respiratory chain that catalyzes the reduction of oxygen to water. Electrons originating from reduced cytochrome c in the intermembrane space (IMS) are transferred via the dinuclear copper A center (CU(A)) of subunit 2 and heme A of subunit 1 to the active site in subunit 1, a binuclear center (BNC) formed by heme A3 and copper B (CU(B)). The BNC reduces molecular oxygen to 2 water molecules using 4 electrons from cytochrome c in the IMS and 4 protons from the mitochondrial matrix. The chain is Cytochrome c oxidase subunit 3 (COIII) from Enteroctopus dofleini (North Pacific giant octopus).